The sequence spans 130 residues: Small ribosomal subunit protein uS9 (130 aa).

This sequence belongs to the universal ribosomal protein uS9 family.

This Acidovorax ebreus (strain TPSY) (Diaphorobacter sp. (strain TPSY)) protein is Small ribosomal subunit protein uS9.